Consider the following 321-residue polypeptide: Homoserine kinase (321 aa).

It belongs to the pseudomonas-type ThrB family.

It carries out the reaction L-homoserine + ATP = O-phospho-L-homoserine + ADP + H(+). Its pathway is amino-acid biosynthesis; L-threonine biosynthesis; L-threonine from L-aspartate: step 4/5. The protein is Homoserine kinase of Xanthobacter autotrophicus (strain ATCC BAA-1158 / Py2).